We begin with the raw amino-acid sequence, 984 residues long: Probable beta-galactosidase C (984 aa).

An N-terminal signal peptide occupies residues 1-19 (MRLLNIFTTLCLLLWSGAA). Substrate contacts are provided by tyrosine 78, asparagine 123, alanine 124, glutamate 125, and asparagine 183. The active-site Proton donor is the glutamate 184. Tyrosine 247 is a binding site for substrate. The cysteines at positions 253 and 300 are disulfide-linked. Residue asparagine 272 is glycosylated (N-linked (GlcNAc...) asparagine). Glutamate 283 functions as the Nucleophile in the catalytic mechanism. Residue tyrosine 349 coordinates substrate. N-linked (GlcNAc...) asparagine glycans are attached at residues asparagine 387, asparagine 433, asparagine 462, asparagine 516, asparagine 583, asparagine 599, asparagine 673, asparagine 716, asparagine 756, asparagine 860, and asparagine 870.

The protein belongs to the glycosyl hydrolase 35 family.

Its subcellular location is the secreted. The enzyme catalyses Hydrolysis of terminal non-reducing beta-D-galactose residues in beta-D-galactosides.. Its function is as follows. Cleaves beta-linked terminal galactosyl residues from gangliosides, glycoproteins, and glycosaminoglycans. The chain is Probable beta-galactosidase C (lacC) from Sclerotinia sclerotiorum (strain ATCC 18683 / 1980 / Ss-1) (White mold).